The sequence spans 70 residues: Large ribosomal subunit protein bL31 (70 aa).

4 residues coordinate Zn(2+): cysteine 16, cysteine 18, cysteine 37, and cysteine 40.

Belongs to the bacterial ribosomal protein bL31 family. Type A subfamily. As to quaternary structure, part of the 50S ribosomal subunit. Zn(2+) is required as a cofactor.

Functionally, binds the 23S rRNA. The chain is Large ribosomal subunit protein bL31 from Shewanella sp. (strain MR-4).